The sequence spans 293 residues: 4-diphosphocytidyl-2-C-methyl-D-erythritol kinase (293 aa).

The active site involves K16. An ATP-binding site is contributed by 99-109; sequence PMGAGLGGGSS. The active site involves D141.

It belongs to the GHMP kinase family. IspE subfamily.

It carries out the reaction 4-CDP-2-C-methyl-D-erythritol + ATP = 4-CDP-2-C-methyl-D-erythritol 2-phosphate + ADP + H(+). The protein operates within isoprenoid biosynthesis; isopentenyl diphosphate biosynthesis via DXP pathway; isopentenyl diphosphate from 1-deoxy-D-xylulose 5-phosphate: step 3/6. Its function is as follows. Catalyzes the phosphorylation of the position 2 hydroxy group of 4-diphosphocytidyl-2C-methyl-D-erythritol. The protein is 4-diphosphocytidyl-2-C-methyl-D-erythritol kinase of Burkholderia multivorans (strain ATCC 17616 / 249).